The sequence spans 1351 residues: Bromodomain-containing protein 4A (1351 aa).

Disordered stretches follow at residues 1-23 (MSSE…GIEG), 35-58 (PQPQ…QPKR), 168-244 (ETEL…RPPA), 285-368 (AAQP…DTKT), 478-638 (EPEE…PMSY), 700-799 (CLRK…LDSS), and 821-1334 (PDLP…PSID). The Bromo 1 domain occupies 58-164 (RQTNQLQYLL…KLFLQKISEM (107 aa)). Positions 208-219 (VKPPVTPVSKPS) are enriched in low complexity. Residues 220–235 (TPTPPTVTRAPTPPQT) are compositionally biased toward pro residues. Residues 327–343 (PRKENGRQIRPTKKTEV) show a composition bias toward basic and acidic residues. Over residues 349–359 (PAPPVLHPQPA) the composition is skewed to pro residues. The Bromo 2 domain occupies 366 to 475 (TKTSEQLRYC…DVFEMRFAKM (110 aa)). Pro residues predominate over residues 482 to 504 (APAPVPSLAPGPPAPSIKGPPPT). Residues 504 to 522 (TSSDSSSDSTSDSESSSDS) are NPS region. Positions 505–517 (SSDSSSDSTSDSE) are enriched in low complexity. The interval 543 to 598 (QLAALSQPQPNKPKKKEREKRKEKHKRKEEVEEPRKGRIREPPAKKPKKSVQGSGG) is BID region. Over residues 554–569 (KPKKKEREKRKEKHKR) the composition is skewed to basic residues. Basic and acidic residues predominate over residues 570–586 (KEEVEEPRKGRIREPPA). The span at 607 to 621 (PPPAPRPARPAPPSA) shows a compositional bias: pro residues. The region spanning 624–708 (ESSEEETQRC…SCLRKKRKSQ (85 aa)) is the NET domain. Positions 629–638 (ETQRCRPMSY) are enriched in basic and acidic residues. Residues 725-738 (SSSESESSSESSTS) show a composition bias toward low complexity. Residues 751 to 767 (QKKKGHSGRESRKHHHP) are compositionally biased toward basic residues. Low complexity predominate over residues 788–799 (PSYPLPSSLDSS). The segment covering 872–890 (PAMPPSASPPPPAPQPPQQ) has biased composition (pro residues). Positions 892–902 (HVHHHHHHHAQ) are enriched in basic residues. The span at 927–953 (LQKSQQPPTQSPIHSLLTSVKVQSQTP) shows a compositional bias: polar residues. Residues 968–983 (VYPPPPSTATTAPPPA) show a composition bias toward pro residues. Low complexity-rich tracts occupy residues 994–1003 (PVVPQQLPAG) and 1011–1028 (QQQQ…SHQQ). Residues 1051–1350 (RQQKQETYPG…LMEIFEQNLF (300 aa)) are C-terminal (CTD) region. Residues 1075 to 1089 (PPVPPYPGLTHPPSP) show a composition bias toward pro residues. Basic and acidic residues-rich tracts occupy residues 1150 to 1161 (PRPDLKKMDGGR) and 1176 to 1197 (PEKE…DIKI). Polar residues predominate over residues 1214-1224 (PTSAGKSTSDS). The segment covering 1226–1284 (ELFRRQAREKEERERALKLQAEQAERVRREQDRMSRTREDDEVQDQARKAHEEARRRQE) has biased composition (basic and acidic residues). A compositionally biased stretch (low complexity) spans 1301-1310 (SPAQSSQPMM). Basic and acidic residues predominate over residues 1311 to 1323 (DQREMARKREQER).

The protein belongs to the BET family.

It is found in the nucleus. The protein resides in the chromosome. In terms of biological role, chromatin reader protein that recognizes and binds acetylated histones and plays a key role in transmission of epigenetic memory across cell divisions and transcription regulation. Remains associated with acetylated chromatin throughout the entire cell cycle and provides epigenetic memory for postmitotic G1 gene transcription by preserving acetylated chromatin status and maintaining high-order chromatin structure. During interphase, plays a key role in regulating the transcription of signal-inducible genes by associating with the P-TEFb complex and recruiting it to promoters. This is Bromodomain-containing protein 4A (brd4-a) from Xenopus laevis (African clawed frog).